The sequence spans 317 residues: Peroxidase 64 (317 aa).

Residues 1–22 (MNAHMLNLLVIVIFVVSFDVQA) form the signal peptide. 4 disulfide bridges follow: cysteine 32–cysteine 111, cysteine 65–cysteine 70, cysteine 117–cysteine 313, and cysteine 195–cysteine 227. Histidine 63 functions as the Proton acceptor in the catalytic mechanism. The Ca(2+) site is built by aspartate 64, valine 67, glycine 69, aspartate 71, and serine 73. Proline 158 provides a ligand contact to substrate. Asparagine 163 carries N-linked (GlcNAc...) asparagine glycosylation. Histidine 188 is a heme b binding site. Position 189 (threonine 189) interacts with Ca(2+). Ca(2+) contacts are provided by aspartate 241, threonine 243, and aspartate 248.

The protein belongs to the peroxidase family. Classical plant (class III) peroxidase subfamily. Heme b serves as cofactor. The cofactor is Ca(2+). In terms of tissue distribution, expressed in the whole plant, but preferentially in roots.

It localises to the secreted. The enzyme catalyses 2 a phenolic donor + H2O2 = 2 a phenolic radical donor + 2 H2O. In terms of biological role, removal of H(2)O(2), oxidation of toxic reductants, biosynthesis and degradation of lignin, suberization, auxin catabolism, response to environmental stresses such as wounding, pathogen attack and oxidative stress. These functions might be dependent on each isozyme/isoform in each plant tissue. This is Peroxidase 64 (PER64) from Arabidopsis thaliana (Mouse-ear cress).